Consider the following 387-residue polypeptide: Glucose-1-phosphate adenylyltransferase (387 aa).

Residues Tyr99, Gly164, 179–180 (EK), and Ser190 contribute to the alpha-D-glucose 1-phosphate site.

The protein belongs to the bacterial/plant glucose-1-phosphate adenylyltransferase family. In terms of assembly, homotetramer.

It carries out the reaction alpha-D-glucose 1-phosphate + ATP + H(+) = ADP-alpha-D-glucose + diphosphate. It functions in the pathway glycan biosynthesis; glycogen biosynthesis. In terms of biological role, involved in the biosynthesis of ADP-glucose, a building block required for the elongation reactions to produce glycogen. Catalyzes the reaction between ATP and alpha-D-glucose 1-phosphate (G1P) to produce pyrophosphate and ADP-Glc. The polypeptide is Glucose-1-phosphate adenylyltransferase (Geobacillus stearothermophilus (Bacillus stearothermophilus)).